The chain runs to 174 residues: Adipose-secreted signaling protein (174 aa).

At Ala2 the chain carries N-acetylalanine. The residue at position 147 (Thr147) is a Phosphothreonine.

The protein belongs to the ADISSP family. In terms of tissue distribution, expression is adipose-specific and highly brown adipose tissue-enriched.

The protein resides in the secreted. Functionally, adipocyte-secreted protein (adipokine) that acts as a key regulator for white adipose tissue (WAT) thermogenesis and glucose homeostasis at least in part through activation of protein kinase A (PKA). The chain is Adipose-secreted signaling protein from Mus musculus (Mouse).